A 348-amino-acid polypeptide reads, in one-letter code: NFSTPLNEHEEVSYESAGYTVLQILPLVVLGVTFVLGVLGNGLVIWVAGFRMTRTVTTICYLNLPLADFSFTATLPFLIVSMAMGEKWPFGWFLCKLIHIVVDINLFGSVFLIGFIALDRCICVLHPVWAQNHRTVSLAMKVIIGPWILALVLTLPVFLFLTTVTIPNGDTYCTFNFASWGGTPEERKNVAITMLTARGIIRFVIGFSMPMSIVAICYGLIAAKIHKKGMIKSSRPLRVLTAVVASFFICWFPFQLVALLSTVWLKEMLFYGKYKIINILVNPTSSLAFFNSCLNPMLYVFVGQDFRERLIRSLPTSLERALSEDSAPTNDTAAKCASPPAETELQAM.

Asn1 carries an N-linked (GlcNAc...) asparagine glycan. Over 1–24 (NFSTPLNEHEEVSYESAGYTVLQI) the chain is Extracellular. The chain crosses the membrane as a helical span at residues 25–47 (LPLVVLGVTFVLGVLGNGLVIWV). The Cytoplasmic segment spans residues 48 to 58 (AGFRMTRTVTT). Residues 59 to 80 (ICYLNLPLADFSFTATLPFLIV) form a helical membrane-spanning segment. Residues 81–97 (SMAMGEKWPFGWFLCKL) lie on the Extracellular side of the membrane. Cys95 and Cys173 form a disulfide bridge. The helical transmembrane segment at 98–118 (IHIVVDINLFGSVFLIGFIAL) threads the bilayer. At 119 to 137 (DRCICVLHPVWAQNHRTVS) the chain is on the cytoplasmic side. A helical transmembrane segment spans residues 138-159 (LAMKVIIGPWILALVLTLPVFL). Topologically, residues 160–202 (FLTTVTIPNGDTYCTFNFASWGGTPEERKNVAITMLTARGIIR) are extracellular. The chain crosses the membrane as a helical span at residues 203 to 223 (FVIGFSMPMSIVAICYGLIAA). Over 224–239 (KIHKKGMIKSSRPLRV) the chain is Cytoplasmic. Residues 240-263 (LTAVVASFFICWFPFQLVALLSTV) form a helical membrane-spanning segment. Topologically, residues 264-283 (WLKEMLFYGKYKIINILVNP) are extracellular. A helical membrane pass occupies residues 284–303 (TSSLAFFNSCLNPMLYVFVG). The Cytoplasmic segment spans residues 304–348 (QDFRERLIRSLPTSLERALSEDSAPTNDTAAKCASPPAETELQAM). The tract at residues 323-348 (SEDSAPTNDTAAKCASPPAETELQAM) is disordered.

It belongs to the G-protein coupled receptor 1 family. As to quaternary structure, interacts with APP; the interaction takes place at the cell surface and the complex is then rapidly internalized.

The protein localises to the cell membrane. Its function is as follows. Low affinity receptor for N-formyl-methionyl peptides, which are powerful neutrophil chemotactic factors. Binding of FMLP to the receptor causes activation of neutrophils. This response is mediated via a G-protein that activates a phosphatidylinositol-calcium second messenger system. Receptor for the chemokine-like protein FAM19A5, mediating FAM19A5-stimulated macrophage chemotaxis and the inhibitory effect on TNFSF11/RANKL-induced osteoclast differentiation. This Pongo pygmaeus (Bornean orangutan) protein is N-formyl peptide receptor 2 (FPR2).